The primary structure comprises 270 residues: L-fucose dehydrogenase (270 aa).

R19, I21, D40, K41, D62, V63, N89, Y154, K158, I187, T189, and L191 together coordinate NAD(+).

The protein belongs to the short-chain dehydrogenases/reductases (SDR) family.

It carries out the reaction L-fucose + NAD(+) = L-fucono-1,5-lactone + NADH + H(+). The enzyme catalyses D-arabinose + NAD(+) = D-arabinono-1,5-lactone + NADH + H(+). It catalyses the reaction L-galactose + NAD(+) = L-galactono-1,5-lactone + NADH + H(+). Its function is as follows. Catalyzes the NAD(+)-dependent oxidation of L-fucose, yielding L-fucono-1,5-lactone, which rapidly converts spontaneously to L-fucone-1,4-lactone. Does not use NADPH. Displays low activity on L-fucose, D-arabinose and L-galactose compared with rabbit and human. This is consitent with the low L-fucose metabolism observed in this species. This Rattus norvegicus (Rat) protein is L-fucose dehydrogenase (Hsd17b14).